A 99-amino-acid polypeptide reads, in one-letter code: MKATRRTRVASERGVRRRRRVRATRKAGELPVKVWARTLPSAAWDPVGSVRTQVTPSRAAPRTCQPPAWSSRRRGRPRSSRARSTEPAWSPEGVVRCAT.

2 disordered regions span residues 1–24 (MKATRRTRVASERGVRRRRRVRAT) and 49–99 (SVRT…RCAT). Basic residues-rich tracts occupy residues 15 to 24 (VRRRRRVRAT) and 71 to 81 (SRRRGRPRSSR).

This is an uncharacterized protein from Streptomyces fradiae (Streptomyces roseoflavus).